The sequence spans 1551 residues: Pentafunctional AROM polypeptide 1 (1551 aa).

Residues 1–379 (MSIEKVSILG…YESKAHQIFK (379 aa)) are 3-dehydroquinate synthase. NAD(+) contacts are provided by residues 42–44 (DTN), 80–83 (ENHK), 111–113 (GGV), and D116. R127 contacts 7-phospho-2-dehydro-3-deoxy-D-arabino-heptonate. NAD(+) is bound at residue 136–137 (TT). 7-phospho-2-dehydro-3-deoxy-D-arabino-heptonate contacts are provided by D143 and K149. Position 158 (K158) interacts with NAD(+). N159 is a 7-phospho-2-dehydro-3-deoxy-D-arabino-heptonate binding site. Residues 176–179 (FLQT) and N187 each bind NAD(+). E191 lines the Zn(2+) pocket. 7-phospho-2-dehydro-3-deoxy-D-arabino-heptonate contacts are provided by residues 191–194 (EVVK) and K243. E253 functions as the Proton acceptor; for 3-dehydroquinate synthase activity in the catalytic mechanism. 7-phospho-2-dehydro-3-deoxy-D-arabino-heptonate contacts are provided by residues 257–261 (RNLLN) and H264. Zn(2+) is bound at residue H264. H268 (proton acceptor; for 3-dehydroquinate synthase activity) is an active-site residue. The 7-phospho-2-dehydro-3-deoxy-D-arabino-heptonate site is built by H280 and K351. Position 280 (H280) interacts with Zn(2+). The EPSP synthase stretch occupies residues 392 to 835 (VHPFANRHPE…WDVLHSKFNA (444 aa)). The tract at residues 854-1044 (DRSIVIIGMR…LPATRSTFVT (191 aa)) is shikimate kinase. 861–868 (GMRAAGKT) is an ATP binding site. The tract at residues 1045-1258 (LTYPDLRKVP…IGVGQLSLKE (214 aa)) is 3-dehydroquinase. The active-site Proton acceptor; for 3-dehydroquinate dehydratase activity is the H1162. K1191 functions as the Schiff-base intermediate with substrate; for 3-dehydroquinate dehydratase activity in the catalytic mechanism. Residues 1271-1551 (EKEFWVVGSP…KVIHSAVLNE (281 aa)) are shikimate dehydrogenase.

It in the N-terminal section; belongs to the sugar phosphate cyclases superfamily. Dehydroquinate synthase family. This sequence in the 2nd section; belongs to the EPSP synthase family. The protein in the 3rd section; belongs to the shikimate kinase family. In the 4th section; belongs to the type-I 3-dehydroquinase family. It in the C-terminal section; belongs to the shikimate dehydrogenase family. As to quaternary structure, homodimer. Requires Zn(2+) as cofactor.

The protein localises to the cytoplasm. It catalyses the reaction 7-phospho-2-dehydro-3-deoxy-D-arabino-heptonate = 3-dehydroquinate + phosphate. It carries out the reaction 3-dehydroquinate = 3-dehydroshikimate + H2O. The catalysed reaction is shikimate + NADP(+) = 3-dehydroshikimate + NADPH + H(+). The enzyme catalyses shikimate + ATP = 3-phosphoshikimate + ADP + H(+). It catalyses the reaction 3-phosphoshikimate + phosphoenolpyruvate = 5-O-(1-carboxyvinyl)-3-phosphoshikimate + phosphate. It participates in metabolic intermediate biosynthesis; chorismate biosynthesis; chorismate from D-erythrose 4-phosphate and phosphoenolpyruvate: step 2/7. The protein operates within metabolic intermediate biosynthesis; chorismate biosynthesis; chorismate from D-erythrose 4-phosphate and phosphoenolpyruvate: step 3/7. It functions in the pathway metabolic intermediate biosynthesis; chorismate biosynthesis; chorismate from D-erythrose 4-phosphate and phosphoenolpyruvate: step 4/7. Its pathway is metabolic intermediate biosynthesis; chorismate biosynthesis; chorismate from D-erythrose 4-phosphate and phosphoenolpyruvate: step 5/7. It participates in metabolic intermediate biosynthesis; chorismate biosynthesis; chorismate from D-erythrose 4-phosphate and phosphoenolpyruvate: step 6/7. The AROM polypeptide catalyzes 5 consecutive enzymatic reactions in prechorismate polyaromatic amino acid biosynthesis. This is Pentafunctional AROM polypeptide 1 from Lodderomyces elongisporus (strain ATCC 11503 / CBS 2605 / JCM 1781 / NBRC 1676 / NRRL YB-4239) (Yeast).